A 195-amino-acid chain; its full sequence is MLIFFEGIDGVGKSTQIELLKSVYNKNYLITKEPGGTLLGEKLREILLESDFKISKTAELFLFLADRAEHFEKVLKFSDKKDIICDRSFVSGIAYALANEQNLDINDLINLNKIALGGKIPNAKFIFLKISKDNLRFRLENRGNFDKIEERGLEYLMKVQKNMSEIFKILKIDALEIDANGDINEIHKKIKEFVK.

7–14 is a binding site for ATP; sequence GIDGVGKS.

The protein belongs to the thymidylate kinase family.

The catalysed reaction is dTMP + ATP = dTDP + ADP. In terms of biological role, phosphorylation of dTMP to form dTDP in both de novo and salvage pathways of dTTP synthesis. This is Thymidylate kinase from Campylobacter hominis (strain ATCC BAA-381 / DSM 21671 / CCUG 45161 / LMG 19568 / NCTC 13146 / CH001A).